A 206-amino-acid polypeptide reads, in one-letter code: Imidazoleglycerol-phosphate dehydratase (206 aa).

The disordered stretch occupies residues 1-21 (MTALDSSRLLQPRTASVHRRT).

The protein belongs to the imidazoleglycerol-phosphate dehydratase family.

It is found in the cytoplasm. It catalyses the reaction D-erythro-1-(imidazol-4-yl)glycerol 3-phosphate = 3-(imidazol-4-yl)-2-oxopropyl phosphate + H2O. It participates in amino-acid biosynthesis; L-histidine biosynthesis; L-histidine from 5-phospho-alpha-D-ribose 1-diphosphate: step 6/9. This Synechococcus sp. (strain JA-2-3B'a(2-13)) (Cyanobacteria bacterium Yellowstone B-Prime) protein is Imidazoleglycerol-phosphate dehydratase.